Reading from the N-terminus, the 186-residue chain is Small ribosomal subunit protein uS5 (186 aa).

The S5 DRBM domain occupies phenylalanine 18–valine 81.

Belongs to the universal ribosomal protein uS5 family. In terms of assembly, part of the 30S ribosomal subunit. Contacts proteins S4 and S8.

Its function is as follows. With S4 and S12 plays an important role in translational accuracy. In terms of biological role, located at the back of the 30S subunit body where it stabilizes the conformation of the head with respect to the body. The sequence is that of Small ribosomal subunit protein uS5 from Parvibaculum lavamentivorans (strain DS-1 / DSM 13023 / NCIMB 13966).